The chain runs to 236 residues: UPF0257 lipoprotein YnfC (236 aa).

Positions 1–16 (MKKPLLLTLLCMILAG) are cleaved as a signal peptide. A lipid anchor (N-palmitoyl cysteine) is attached at Cys17. Cys17 carries the S-diacylglycerol cysteine lipid modification.

This sequence belongs to the UPF0257 family.

It localises to the cell membrane. This Salmonella heidelberg (strain SL476) protein is UPF0257 lipoprotein YnfC.